The following is a 304-amino-acid chain: Acetyl-coenzyme A carboxylase carboxyl transferase subunit beta (304 aa).

One can recognise a CoA carboxyltransferase N-terminal domain in the interval 23–292 (VWTKCDSCGQ…PNPEAPREGV (270 aa)). Residues Cys27, Cys30, Cys46, and Cys49 each contribute to the Zn(2+) site. The segment at 27–49 (CDSCGQVLYRAELERNLEVCPKC) adopts a C4-type zinc-finger fold. Residues 284 to 304 (NPEAPREGVVVPPVPDQEPEA) form a disordered region. Positions 295–304 (PPVPDQEPEA) are enriched in pro residues.

It belongs to the AccD/PCCB family. As to quaternary structure, acetyl-CoA carboxylase is a heterohexamer composed of biotin carboxyl carrier protein (AccB), biotin carboxylase (AccC) and two subunits each of ACCase subunit alpha (AccA) and ACCase subunit beta (AccD). Requires Zn(2+) as cofactor.

It is found in the cytoplasm. The enzyme catalyses N(6)-carboxybiotinyl-L-lysyl-[protein] + acetyl-CoA = N(6)-biotinyl-L-lysyl-[protein] + malonyl-CoA. It participates in lipid metabolism; malonyl-CoA biosynthesis; malonyl-CoA from acetyl-CoA: step 1/1. Its function is as follows. Component of the acetyl coenzyme A carboxylase (ACC) complex. Biotin carboxylase (BC) catalyzes the carboxylation of biotin on its carrier protein (BCCP) and then the CO(2) group is transferred by the transcarboxylase to acetyl-CoA to form malonyl-CoA. This Shigella flexneri serotype 5b (strain 8401) protein is Acetyl-coenzyme A carboxylase carboxyl transferase subunit beta.